A 332-amino-acid chain; its full sequence is F-box/SPRY domain-containing protein 1 (332 aa).

Positions 1-10 (MTENNEETIV) are enriched in acidic residues. Residues 1-81 (MTENNEETIV…RRSPRRPEVS (81 aa)) are disordered. The segment covering 15-24 (CNLTSSTPMK) has biased composition (polar residues). One can recognise an F-box domain in the interval 79-127 (EVSASRLPLKVLNQIFQYLSLKDLRSAMLTCHSWNNALSMEDSDIWQQL). Residues 138–330 (SDPFLFVELR…VTMVYVGSPQ (193 aa)) enclose the B30.2/SPRY domain.

Belongs to the FBXO45/Fsn family. As to quaternary structure, component of an SCF (SKP1-CUL1-F-box protein) E3 ubiquitin ligase complex composed of cul-1, fsn-1, rpm-1 and skr-1. Interacts (via SPRY domain) with scd-2 (via cytoplasmic domain). Interacts (via SPRY domain) with convertase egl-3 (via C-terminus).

It is found in the synapse. It functions in the pathway protein modification; protein ubiquitination. Its function is as follows. Component of a SCF (SKP1-CUL1-F-box protein) E3 ubiquitin ligase complex which is required for the restriction and/or maturation of synapses in GABAergic neuromuscular junction (NMJ) presynaptic neurons. Promotes NRJ synapse development and synaptic transmission by negatively regulating the daf-2/InsR pathway in muscles. By targeting convertase egl-3 for degradation, negatively modulates insulin-like protein ins-4 and ins-6 processing. May stabilize synapse formation by promoting the down-regulation of scd-2. Regulates axon termination in PLM and ALM neurons. The chain is F-box/SPRY domain-containing protein 1 (fsn-1) from Caenorhabditis briggsae.